A 115-amino-acid polypeptide reads, in one-letter code: Hydrogenase maturation factor HypA (115 aa).

Residue H2 coordinates Ni(2+). C73, C76, C89, and C92 together coordinate Zn(2+).

The protein belongs to the HypA/HybF family.

Its function is as follows. Involved in the maturation of [NiFe] hydrogenases. Required for nickel insertion into the metal center of the hydrogenase. This Nitrosospira multiformis (strain ATCC 25196 / NCIMB 11849 / C 71) protein is Hydrogenase maturation factor HypA.